The primary structure comprises 913 residues: Cadherin-4 (913 aa).

Positions 1 to 20 (MTTGSVLPLLLLGLSGALRA) are cleaved as a signal peptide. A propeptide spanning residues 21-166 (HREDLTVREA…SSGGLRRQKR (146 aa)) is cleaved from the precursor. Asparagine 146 carries N-linked (GlcNAc...) asparagine glycosylation. Cadherin domains follow at residues 167-274 (DWVI…RPEF), 275-389 (INQV…PPEF), 390-504 (TTST…APYF), 505-610 (PSNH…DNAP), and 611-721 (QLLP…TVGA). Over 167–731 (DWVIPPINVP…VAAAGLGTGA (565 aa)) the chain is Extracellular. Asparagine 280, asparagine 409, asparagine 554, asparagine 629, asparagine 658, and asparagine 699 each carry an N-linked (GlcNAc...) asparagine glycan. A helical membrane pass occupies residues 732-753 (IVAILICIVILLIMVLLFVVWM). Topologically, residues 754-913 (KRREKERHTK…ADMYGGGEED (160 aa)) are cytoplasmic.

In terms of tissue distribution, distributed widely in mouse tissues with high levels present in brain, skeletal muscle and thymus.

It is found in the cell membrane. Functionally, cadherins are calcium-dependent cell adhesion proteins. They preferentially interact with themselves in a homophilic manner in connecting cells; cadherins may thus contribute to the sorting of heterogeneous cell types. May play an important role in retinal development. The sequence is that of Cadherin-4 (Cdh4) from Mus musculus (Mouse).